The chain runs to 368 residues: MIFKQIRRLIAAALLAALSLPAAAQPLRQLVNVEGIRDNQLIGYGIVVGLDGTGDNSQVKFSGQSVANMLKQFGLKMPEKTDTRVKNVAAVMVSASLPPGYSRGQTIDVTVSSLGDAKSLRGGTLLLTQLKAANGEVYALAQGSVVIGGLSAQGKSGSSVTVNTPTAGRIPNGASIEREIPSDFEQGDSIRLSLRRPSFETATNVVRAINRNYGKIATTRNATTIEVRAPGDPTERVAFVARLEKMNVDVGAEIPRVVFNSRTGTVVISEGVTVRPAAVSHGSLRVVISESSQVSQPGPFSNGTTQVVPDSRVQVEQGQGRMFKWPAGASLRAIIDTVNRTGATPDDVMAILQALDQAGAIDGELVVI.

Residues 1–24 (MIFKQIRRLIAAALLAALSLPAAA) form the signal peptide.

Belongs to the FlgI family. In terms of assembly, the basal body constitutes a major portion of the flagellar organelle and consists of four rings (L,P,S, and M) mounted on a central rod.

It is found in the periplasm. It localises to the bacterial flagellum basal body. Functionally, assembles around the rod to form the L-ring and probably protects the motor/basal body from shearing forces during rotation. The sequence is that of Flagellar P-ring protein 1 from Chromobacterium violaceum (strain ATCC 12472 / DSM 30191 / JCM 1249 / CCUG 213 / NBRC 12614 / NCIMB 9131 / NCTC 9757 / MK).